We begin with the raw amino-acid sequence, 239 residues long: Ribosomal RNA small subunit methyltransferase G (239 aa).

Residues glycine 78, phenylalanine 83, alanine 129 to glutamate 130, and arginine 148 contribute to the S-adenosyl-L-methionine site.

The protein belongs to the methyltransferase superfamily. RNA methyltransferase RsmG family.

It is found in the cytoplasm. Functionally, specifically methylates the N7 position of a guanine in 16S rRNA. The protein is Ribosomal RNA small subunit methyltransferase G of Clostridium perfringens (strain 13 / Type A).